The chain runs to 386 residues: Phosphatidyl-myo-inositol mannosyltransferase (386 aa).

2 residues coordinate GDP-alpha-D-mannose: Y9 and G16. A 1,2-diacyl-sn-glycero-3-phospho-(1D-myo-inositol) is bound by residues Q18, Y62–N63, and R68. GDP-alpha-D-mannose is bound by residues R196, R201–K202, V251–D253, K256, E274–I278, and E282.

The protein belongs to the glycosyltransferase group 1 family. Glycosyltransferase 4 subfamily. Monomer. Mg(2+) serves as cofactor.

The protein resides in the cell membrane. The enzyme catalyses a 1,2-diacyl-sn-glycero-3-phospho-(1D-myo-inositol) + GDP-alpha-D-mannose = a 1,2-diacyl-sn-glycero-3-phospho-[alpha-D-mannopyranosyl-(1&lt;-&gt;6)-D-myo-inositol] + GDP + H(+). It participates in phospholipid metabolism; phosphatidylinositol metabolism. Involved in the biosynthesis of phosphatidyl-myo-inositol mannosides (PIM) which are early precursors in the biosynthesis of lipomannans (LM) and lipoarabinomannans (LAM). Catalyzes the addition of a mannosyl residue from GDP-D-mannose (GDP-Man) to the position 2 of the carrier lipid phosphatidyl-myo-inositol (PI) to generate a phosphatidyl-myo-inositol bearing an alpha-1,2-linked mannose residue (PIM1). In contrary to PimB, the mannosyltransferase PimA is unable to transfer a mannose residue to the position 6 of the phosphatidyl-myo-inositol of PIM1. The chain is Phosphatidyl-myo-inositol mannosyltransferase from Mycolicibacterium smegmatis (strain ATCC 700084 / mc(2)155) (Mycobacterium smegmatis).